Reading from the N-terminus, the 278-residue chain is S-formylglutathione hydrolase YeiG (278 aa).

Residues Ser-145, Asp-223, and His-256 each act as charge relay system in the active site.

This sequence belongs to the esterase D family.

It catalyses the reaction S-formylglutathione + H2O = formate + glutathione + H(+). Serine hydrolase involved in the detoxification of formaldehyde. Hydrolyzes S-formylglutathione to glutathione and formate. The sequence is that of S-formylglutathione hydrolase YeiG (yeiG) from Shigella flexneri serotype 5b (strain 8401).